A 404-amino-acid polypeptide reads, in one-letter code: MIVENIPDEFKKALPILEKIREAGFEAYFVGGSVRDTLLGLPIHDVDIASSAYPEEIKQIFSKTVDTGVEHGTVMVLDHGTGYEITTFRTESTYQDYRRPDKVEFVRSLEEDLKRRDLTINALAMDDKGKIIDLFDGLKDLKNGIIRAVGNPEERFHEDALRMMRAVRFGSQLDFKVELDTFNAIKKNSHLLEKIAIERIHVEWVKLLLGKNPKQGLQEFLDTELYKYCPLFADKYAELKSILEFSDFKLNTEEECWTLLSDVFKLKDTDISNLLRSWKSSNNIIKYVIAASLCVQKIKDSKLDIETYYQNGIEIILTANQIAKIRGFGMDDNELKNNYDKLPIKSRKEMKINGKDLVQEAGVKPGKIMGEILNKLEKEIVFGNIINDKEILIENAKKLLEEKV.

ATP contacts are provided by Gly-32 and Arg-35. CTP contacts are provided by Gly-32 and Arg-35. 2 residues coordinate Mg(2+): Asp-45 and Asp-47. Arg-116, Asp-159, Arg-162, Arg-165, and Arg-168 together coordinate ATP. The CTP site is built by Arg-116, Asp-159, Arg-162, Arg-165, and Arg-168.

Belongs to the tRNA nucleotidyltransferase/poly(A) polymerase family. Bacterial CCA-adding enzyme type 3 subfamily. In terms of assembly, homodimer. Mg(2+) is required as a cofactor.

It catalyses the reaction a tRNA precursor + 2 CTP + ATP = a tRNA with a 3' CCA end + 3 diphosphate. The catalysed reaction is a tRNA with a 3' CCA end + 2 CTP + ATP = a tRNA with a 3' CCACCA end + 3 diphosphate. Functionally, catalyzes the addition and repair of the essential 3'-terminal CCA sequence in tRNAs without using a nucleic acid template. Adds these three nucleotides in the order of C, C, and A to the tRNA nucleotide-73, using CTP and ATP as substrates and producing inorganic pyrophosphate. tRNA 3'-terminal CCA addition is required both for tRNA processing and repair. Also involved in tRNA surveillance by mediating tandem CCA addition to generate a CCACCA at the 3' terminus of unstable tRNAs. While stable tRNAs receive only 3'-terminal CCA, unstable tRNAs are marked with CCACCA and rapidly degraded. The polypeptide is CCA-adding enzyme (Ligilactobacillus salivarius (strain UCC118) (Lactobacillus salivarius)).